The sequence spans 156 residues: Transcription antitermination protein NusB (156 aa).

It belongs to the NusB family.

Involved in transcription antitermination. Required for transcription of ribosomal RNA (rRNA) genes. Binds specifically to the boxA antiterminator sequence of the ribosomal RNA (rrn) operons. The chain is Transcription antitermination protein NusB from Syntrophotalea carbinolica (strain DSM 2380 / NBRC 103641 / GraBd1) (Pelobacter carbinolicus).